The chain runs to 208 residues: MKVISSEIVISAVAPKQYPENGLPEIALAGRSNVGKSSTVNTILKRRKLARVSASPGKTRTINFYIVNNEFHIVDLPGYGYAKVSKGEKETWGKMMETYLSSRKNLYEVILLVDIRHEPTADDKMMYDWIKHYGYGSIVIATKSDKISRGAYQKHFKMIREKLGMSPEDKIIPISSLKREGIDKLWHSIEEIFIANNLPITIEEAEEY.

One can recognise an EngB-type G domain in the interval 22 to 195; it reads GLPEIALAGR…WHSIEEIFIA (174 aa). GTP is bound by residues 30-37, 57-61, 75-78, 142-145, and 174-176; these read GRSNVGKS, GKTRT, DLPG, TKSD, and ISS. Serine 37 and threonine 59 together coordinate Mg(2+).

This sequence belongs to the TRAFAC class TrmE-Era-EngA-EngB-Septin-like GTPase superfamily. EngB GTPase family. Mg(2+) is required as a cofactor.

Functionally, necessary for normal cell division and for the maintenance of normal septation. The sequence is that of Probable GTP-binding protein EngB from Alkaliphilus oremlandii (strain OhILAs) (Clostridium oremlandii (strain OhILAs)).